Here is a 645-residue protein sequence, read N- to C-terminus: Glucans biosynthesis glucosyltransferase H (645 aa).

Residues 1 to 12 (MDGTVTLSSTPT) are compositionally biased toward polar residues. The tract at residues 1 to 22 (MDGTVTLSSTPTAIPPVSALDA) is disordered. The next 7 membrane-spanning stretches (helical) occupy residues 64–84 (LIGGTFAATAVAVWVMLSVLW), 98–118 (LFTLLFAWIAMSFASAVAGFV), 423–443 (APMWGLLMLIGIGIPLAGVGI), 465–485 (AIWIFICTMFVLLAPKLLGYI), 504–524 (AVSILLETVLAALMAPVVMYL), 559–579 (YGGLTVFGLFMGAVAYAVSPA), and 580–600 (LAAWMGPVIVGMALSIPVVAL).

The protein belongs to the glycosyltransferase 2 family. OpgH subfamily.

The protein resides in the cell inner membrane. Its pathway is glycan metabolism; osmoregulated periplasmic glucan (OPG) biosynthesis. Functionally, involved in the biosynthesis of osmoregulated periplasmic glucans (OPGs). This is Glucans biosynthesis glucosyltransferase H from Xanthomonas oryzae pv. oryzae (strain MAFF 311018).